A 512-amino-acid chain; its full sequence is 2-isopropylmalate synthase (512 aa).

Residues 5-268 (LIIFDTTLRD…DLNIDTTHIV (264 aa)) enclose the Pyruvate carboxyltransferase domain. 4 residues coordinate Mn(2+): Asp14, His202, His204, and Asn239. Positions 394 to 512 (AFVSLSQHSE…SQAEKVAAQG (119 aa)) are regulatory domain.

It belongs to the alpha-IPM synthase/homocitrate synthase family. LeuA type 1 subfamily. As to quaternary structure, homodimer. The cofactor is Mn(2+).

It is found in the cytoplasm. It catalyses the reaction 3-methyl-2-oxobutanoate + acetyl-CoA + H2O = (2S)-2-isopropylmalate + CoA + H(+). Its pathway is amino-acid biosynthesis; L-leucine biosynthesis; L-leucine from 3-methyl-2-oxobutanoate: step 1/4. In terms of biological role, catalyzes the condensation of the acetyl group of acetyl-CoA with 3-methyl-2-oxobutanoate (2-ketoisovalerate) to form 3-carboxy-3-hydroxy-4-methylpentanoate (2-isopropylmalate). The chain is 2-isopropylmalate synthase from Variovorax paradoxus (strain S110).